The following is a 170-amino-acid chain: Putative phosphoesterase OB1230 (170 aa).

H34 serves as the catalytic Proton donor. 2 consecutive short sequence motifs (HXTX) follow at residues 34–37 (HLTL) and 115–118 (HITI). The active-site Proton acceptor is H115.

Belongs to the 2H phosphoesterase superfamily. YjcG family.

In Oceanobacillus iheyensis (strain DSM 14371 / CIP 107618 / JCM 11309 / KCTC 3954 / HTE831), this protein is Putative phosphoesterase OB1230.